Consider the following 211-residue polypeptide: Urease accessory protein UreG (211 aa).

Residue 12–19 (GPVGAGKT) coordinates GTP.

The protein belongs to the SIMIBI class G3E GTPase family. UreG subfamily. Homodimer. UreD, UreF and UreG form a complex that acts as a GTP-hydrolysis-dependent molecular chaperone, activating the urease apoprotein by helping to assemble the nickel containing metallocenter of UreC. The UreE protein probably delivers the nickel.

It localises to the cytoplasm. Its function is as follows. Facilitates the functional incorporation of the urease nickel metallocenter. This process requires GTP hydrolysis, probably effectuated by UreG. The sequence is that of Urease accessory protein UreG from Paracoccus denitrificans (strain Pd 1222).